The sequence spans 113 residues: Ig kappa chain V-II region MOPC 511 (113 aa).

The interval 1 to 23 (DIVITQDELSKPVTSGESVSISC) is framework-1. A disulfide bridge links C23 with C93. The complementarity-determining-1 stretch occupies residues 24 to 39 (RSSKSLLYKDGKTYLN). The interval 40–54 (WFLQGPQQSPRLLIY) is framework-2. Positions 55–61 (LMSTRAS) are complementarity-determining-2. A framework-3 region spans residues 62 to 93 (GVSDRFSGSGSGTDFTLEISRVKAEDVGVYYC). The interval 94–102 (QQLVEYPLT) is complementarity-determining-3. The tract at residues 103 to 112 (FGAGTKLELK) is framework-4.

The protein is Ig kappa chain V-II region MOPC 511 of Mus musculus (Mouse).